Here is a 196-residue protein sequence, read N- to C-terminus: Pyridoxal 5'-phosphate synthase subunit PdxT (196 aa).

47-49 (GES) provides a ligand contact to L-glutamine. C79 (nucleophile) is an active-site residue. L-glutamine contacts are provided by residues R106 and 134–135 (IR). Residues H170 and E172 each act as charge relay system in the active site.

The protein belongs to the glutaminase PdxT/SNO family. In terms of assembly, in the presence of PdxS, forms a dodecamer of heterodimers. Only shows activity in the heterodimer.

The enzyme catalyses aldehydo-D-ribose 5-phosphate + D-glyceraldehyde 3-phosphate + L-glutamine = pyridoxal 5'-phosphate + L-glutamate + phosphate + 3 H2O + H(+). The catalysed reaction is L-glutamine + H2O = L-glutamate + NH4(+). The protein operates within cofactor biosynthesis; pyridoxal 5'-phosphate biosynthesis. Functionally, catalyzes the hydrolysis of glutamine to glutamate and ammonia as part of the biosynthesis of pyridoxal 5'-phosphate. The resulting ammonia molecule is channeled to the active site of PdxS. The chain is Pyridoxal 5'-phosphate synthase subunit PdxT from Bacillus cytotoxicus (strain DSM 22905 / CIP 110041 / 391-98 / NVH 391-98).